The chain runs to 341 residues: Anthranilate phosphoribosyltransferase (341 aa).

Residues glycine 79, 82–83 (GD), threonine 87, 89–92 (NIST), 107–115 (KHGNRSISS), and serine 119 each bind 5-phospho-alpha-D-ribose 1-diphosphate. Glycine 79 contributes to the anthranilate binding site. Residue serine 91 participates in Mg(2+) binding. Residue asparagine 110 participates in anthranilate binding. Arginine 164 is a binding site for anthranilate. The Mg(2+) site is built by aspartate 222 and glutamate 223.

The protein belongs to the anthranilate phosphoribosyltransferase family. Homodimer. It depends on Mg(2+) as a cofactor.

The catalysed reaction is N-(5-phospho-beta-D-ribosyl)anthranilate + diphosphate = 5-phospho-alpha-D-ribose 1-diphosphate + anthranilate. The protein operates within amino-acid biosynthesis; L-tryptophan biosynthesis; L-tryptophan from chorismate: step 2/5. In terms of biological role, catalyzes the transfer of the phosphoribosyl group of 5-phosphorylribose-1-pyrophosphate (PRPP) to anthranilate to yield N-(5'-phosphoribosyl)-anthranilate (PRA). The polypeptide is Anthranilate phosphoribosyltransferase (Blochmanniella pennsylvanica (strain BPEN)).